Here is a 124-residue protein sequence, read N- to C-terminus: MKKEQFYPLGIFLAAMLGGLVRYLVSTWLPASPDFPWGTLFVNYLGIFCLIFLVKGYLVYKGTSKGLILALGTGFCGGLTTFSSLMLDTVKLLDTGRYFSLVLYLLLSIGGGLLLAYFLGRKKW.

A run of 4 helical transmembrane segments spans residues 9 to 29 (LGIF…STWL), 34 to 54 (DFPW…IFLV), 67 to 87 (LILA…SLML), and 99 to 119 (FSLV…AYFL). Positions 77 and 80 each coordinate Na(+).

The protein belongs to the fluoride channel Fluc/FEX (TC 1.A.43) family.

The protein localises to the cell membrane. The enzyme catalyses fluoride(in) = fluoride(out). With respect to regulation, na(+) is not transported, but it plays an essential structural role and its presence is essential for fluoride channel function. Fluoride-specific ion channel. Important for reducing fluoride concentration in the cell, thus reducing its toxicity. The sequence is that of Fluoride-specific ion channel FluC 2 from Streptococcus pneumoniae (strain ATCC BAA-255 / R6).